The following is a 115-amino-acid chain: Superoxide reductase (115 aa).

Fe cation is bound by residues Glu14, His16, His41, His47, Cys102, and His105.

It belongs to the desulfoferrodoxin family. In terms of assembly, homotetramer. Requires Fe cation as cofactor.

It catalyses the reaction reduced [rubredoxin] + superoxide + 2 H(+) = oxidized [rubredoxin] + H2O2. Functionally, uses electrons from reduced NADP, by way of rubredoxin and an oxidoreductase, to catalyze the reduction of superoxide to hydrogen peroxide. The sequence is that of Superoxide reductase (sorA) from Pyrococcus horikoshii (strain ATCC 700860 / DSM 12428 / JCM 9974 / NBRC 100139 / OT-3).